The chain runs to 53 residues: Large ribosomal subunit protein bL33 (53 aa).

The protein belongs to the bacterial ribosomal protein bL33 family.

The polypeptide is Large ribosomal subunit protein bL33 (Malacoplasma penetrans (strain HF-2) (Mycoplasma penetrans)).